The primary structure comprises 183 residues: MFKQLRPALASLLVLSLVTGVAYPLLVTGIAQLAFPEQANGSLLRDAEGKVLGSRLIAQKFDGEEWFHSRPSAGDYATVSSAASNLAPSNPALAERIARDAAQERIADQGPVPLALVTTSGSGLDPQLPPQAARYQALRVATARGLPLRLVEDLVESHTERPLVGPAVVNVLALNMALAGLKR.

A helical transmembrane segment spans residues 10 to 30 (ASLLVLSLVTGVAYPLLVTGI).

Belongs to the KdpC family. In terms of assembly, the system is composed of three essential subunits: KdpA, KdpB and KdpC.

The protein localises to the cell inner membrane. In terms of biological role, part of the high-affinity ATP-driven potassium transport (or Kdp) system, which catalyzes the hydrolysis of ATP coupled with the electrogenic transport of potassium into the cytoplasm. This subunit acts as a catalytic chaperone that increases the ATP-binding affinity of the ATP-hydrolyzing subunit KdpB by the formation of a transient KdpB/KdpC/ATP ternary complex. In Pseudomonas aeruginosa (strain ATCC 15692 / DSM 22644 / CIP 104116 / JCM 14847 / LMG 12228 / 1C / PRS 101 / PAO1), this protein is Potassium-transporting ATPase KdpC subunit.